A 315-amino-acid polypeptide reads, in one-letter code: Homoserine kinase (315 aa).

Residue 91–101 (PIGSGLGSSAS) coordinates ATP.

This sequence belongs to the GHMP kinase family. Homoserine kinase subfamily.

The protein localises to the cytoplasm. The catalysed reaction is L-homoserine + ATP = O-phospho-L-homoserine + ADP + H(+). It participates in amino-acid biosynthesis; L-threonine biosynthesis; L-threonine from L-aspartate: step 4/5. Functionally, catalyzes the ATP-dependent phosphorylation of L-homoserine to L-homoserine phosphate. This Buchnera aphidicola subsp. Cinara cedri (strain Cc) protein is Homoserine kinase.